Here is a 1216-residue protein sequence, read N- to C-terminus: Metabotropic glycine receptor (1216 aa).

The signal sequence occupies residues 1-23 (MGVMAYPFLFCLLLVHFGLGAIG). The Extracellular segment spans residues 24-417 (ASREAPSRPD…CFVQEDKYLR (394 aa)). Positions 25–65 (SREAPSRPDPPRERTLRAKQHAQQPARASASDPSAPWSRST) are disordered. Over residues 28–40 (APSRPDPPRERTL) the composition is skewed to basic and acidic residues. Residues 46 to 64 (AQQPARASASDPSAPWSRS) are compositionally biased toward low complexity. Positions 85–281 (YLYTGDSHKL…CENGSYKPGW (197 aa)) are cache-like region. N-linked (GlcNAc...) asparagine glycosylation is found at asparagine 98 and asparagine 143. A disulfide bridge links cysteine 99 with cysteine 272. Serine 172 and arginine 173 together coordinate glycine. A glycan (N-linked (GlcNAc...) asparagine) is linked at asparagine 215. Glutamate 271 contacts glycine. Residue asparagine 274 is glycosylated (N-linked (GlcNAc...) asparagine). Position 307 (aspartate 307) interacts with glycine. Asparagine 333 carries an N-linked (GlcNAc...) asparagine glycan. The chain crosses the membrane as a helical span at residues 418-439 (LAIISFQALCMLLDFLSMLVVY). The Cytoplasmic portion of the chain corresponds to 440-451 (RFRKAKSIRASG). A helical transmembrane segment spans residues 452–474 (LILLETILFGSLLLYFPVVILYF). The Extracellular portion of the chain corresponds to 475-478 (EPST). A helical transmembrane segment spans residues 479 to 501 (FRCILLRWVRLLGFATVYGTVTL). A disulfide bridge links cysteine 481 with cysteine 573. Topologically, residues 502 to 525 (KLHRVLKVFLSRTAQRIPYMTGGR) are cytoplasmic. The chain crosses the membrane as a helical span at residues 526–547 (VMRMLAVILLVVFWFLVGWTSS). The Extracellular segment spans residues 548-576 (VCQNLERHISLIGQGRTSDHLIFSMCLVE). Residues 577–597 (RWDYMTAAAEFLFLLWGVYLC) traverse the membrane as a helical segment. The Cytoplasmic segment spans residues 598–611 (YAVRTVPSAFHEPR). The chain crosses the membrane as a helical span at residues 612–633 (YMAVAVHNELIISAIFHTIRFV). At 634–642 (LASRLQSDW) the chain is on the extracellular side. Residues 643–664 (MLMLYFAHTHLTVTVTIGLLLI) traverse the membrane as a helical segment. Topologically, residues 665–1216 (PKFSHSSNNP…NEEVRLARKV (552 aa)) are cytoplasmic. Phosphoserine occurs at positions 694, 705, and 708. 2 disordered regions span residues 757 to 875 (RITE…ESVP) and 911 to 1000 (KEKT…HMKD). Residues 769 to 781 (CSKEDKDGGEHGS) are compositionally biased toward basic and acidic residues. Lysine 774 is covalently cross-linked (Glycyl lysine isopeptide (Lys-Gly) (interchain with G-Cter in ubiquitin)). Residues 864 to 873 (EDSQAVSTES) show a composition bias toward polar residues. At serine 866 the chain carries Phosphoserine. A compositionally biased stretch (basic and acidic residues) spans 926 to 944 (VEERAKAQKALPRERETNR). 2 stretches are compositionally biased toward polar residues: residues 945 to 963 (KYSN…PNSS) and 980 to 991 (QRANPTTANSDL). At serine 947 the chain carries Phosphoserine. The VCPWE motif 1 motif lies at 1007-1011 (VCPWE). The tract at residues 1038 to 1072 (ERNPTFSLKEKSHPKPKAADLCQQSNPKSVDKAEV) is disordered. Phosphoserine is present on serine 1066. A VCPWE motif 2 motif is present at residues 1072–1076 (VCPWE). Serine 1081 carries the post-translational modification Phosphoserine. The tract at residues 1128–1167 (SKVENENLNQLGEQEKKTSSSERNVPDSHNSSNNFQPPLM) is disordered. The span at 1140–1153 (EQEKKTSSSERNVP) shows a compositional bias: basic and acidic residues. A compositionally biased stretch (polar residues) spans 1154–1163 (DSHNSSNNFQ). Positions 1172 to 1176 (VCPWE) match the VCPWE motif 3 motif.

Belongs to the G-protein coupled receptor 3 family. In terms of assembly, homodimer. Associates with the RGS7-GNB5 complex, promoting its localization to the cell membrane and regulating its GTPase activator activity. Interacts (via VCPWE motifs) with GNAO1. Interacts with GPC4. Interacts with EGFLAM.

The protein resides in the cell membrane. It is found in the postsynaptic cell membrane. The protein localises to the presynaptic cell membrane. It localises to the nucleus. Functionally, metabotropic receptor for glycine that controls synapse formation and function in the brain. Acts as an atypical G-protein coupled receptor that recruits and regulates the RGS7-GNB5 complex instead of activating G proteins. In absence of glycine ligand, promotes the GTPase activator activity of RGS7, increasing the GTPase activity of G protein alpha subunits, thereby driving them into their inactive GDP-bound form. Glycine-binding changes the conformation of the intracellular surface, inhibiting the GTPase activator activity of the RGS7-GNB5 complex, promoting G protein alpha subunits into their active GTP-bound form and regulating cAMP levels. Also able to bind taurine, a compound closely related to glycine, but with a two-fold lower affinity. Glycine receptor-dependent regulation of cAMP controls key ion channels, kinases and neurotrophic factors involved in neuronal excitability and synaptic transmission. Plays a pivotal role in regulating mood and cognition via its ability to regulate neuronal excitability in L2/L3 pyramidal neurons of the prefrontal cortex. Also involved in spatial learning by regulating hippocampal CA1 neuronal excitability. Acts as a synaptic organizer in the hippocampus, required for proper mossy fiber-CA3 neurocircuitry establishment, structure and function: induces presynaptic differentiation in contacting axons via its interaction with GPC4. In addition to glycine, may also act as a receptor for osteocalcin (BGLAP) hormone: osteocalcin-binding initiates a signaling response that prevents neuronal apoptosis in the hippocampus and regulates the synthesis of neurotransmitters. This is Metabotropic glycine receptor (GPR158) from Bos taurus (Bovine).